The primary structure comprises 163 residues: uncharacterized protein (163 aa).

This is an uncharacterized protein from Shigella flexneri.